The primary structure comprises 168 residues: MPLYEHVFLARQDASTQQVEELTTQITSVIEGLGGKVVKMESWGVRSLTYRMHKNRKAHFVLLNIDGPSAVVAEVERQERINEDVIRYLTVRVDELEEGPSAMMRKADRDRDRDDRGGFRGDREGGFRGDREGGFRGGDREGGGFRGDRGPRRPRDDAAPAPAAATEE.

The interval 97–168 is disordered; sequence EEGPSAMMRK…APAPAAATEE (72 aa). The span at 105 to 158 shows a compositional bias: basic and acidic residues; it reads RKADRDRDRDDRGGFRGDREGGFRGDREGGFRGGDREGGGFRGDRGPRRPRDDA.

This sequence belongs to the bacterial ribosomal protein bS6 family.

Its function is as follows. Binds together with bS18 to 16S ribosomal RNA. The protein is Small ribosomal subunit protein bS6 of Rhodopseudomonas palustris (strain BisB18).